A 35-amino-acid polypeptide reads, in one-letter code: Probable L,D-transpeptidase ErfK/SrfK (35 aa).

An N-terminal signal peptide occupies residues 1 to 21 (MRRVKLLCTALMLLASHGALA).

The protein belongs to the YkuD family.

The protein localises to the periplasm. The protein operates within cell wall biogenesis; peptidoglycan biosynthesis. The chain is Probable L,D-transpeptidase ErfK/SrfK (erfK) from Klebsiella aerogenes (Enterobacter aerogenes).